We begin with the raw amino-acid sequence, 308 residues long: 4-hydroxy-tetrahydrodipicolinate synthase (308 aa).

Pyruvate is bound at residue Thr-53. Tyr-141 (proton donor/acceptor) is an active-site residue. Residue Lys-169 is the Schiff-base intermediate with substrate of the active site. Val-209 is a binding site for pyruvate.

The protein belongs to the DapA family. Homotetramer; dimer of dimers.

It localises to the cytoplasm. It catalyses the reaction L-aspartate 4-semialdehyde + pyruvate = (2S,4S)-4-hydroxy-2,3,4,5-tetrahydrodipicolinate + H2O + H(+). Its pathway is amino-acid biosynthesis; L-lysine biosynthesis via DAP pathway; (S)-tetrahydrodipicolinate from L-aspartate: step 3/4. Catalyzes the condensation of (S)-aspartate-beta-semialdehyde [(S)-ASA] and pyruvate to 4-hydroxy-tetrahydrodipicolinate (HTPA). In Acidothermus cellulolyticus (strain ATCC 43068 / DSM 8971 / 11B), this protein is 4-hydroxy-tetrahydrodipicolinate synthase.